Reading from the N-terminus, the 76-residue chain is UPF0291 protein BPUM_1689 (76 aa).

Disordered regions lie at residues 1–31 and 56–76; these read MISK…TEQK and DPEG…QNLH. Composition is skewed to basic and acidic residues over residues 12-31 and 63-76; these read ELSK…TEQK and TPEK…QNLH.

This sequence belongs to the UPF0291 family.

The protein localises to the cytoplasm. This Bacillus pumilus (strain SAFR-032) protein is UPF0291 protein BPUM_1689.